The following is a 379-amino-acid chain: Succinyl-diaminopimelate desuccinylase (379 aa).

His-70 is a Zn(2+) binding site. Residue Asp-72 is part of the active site. Residue Asp-103 participates in Zn(2+) binding. Residue Glu-137 is the Proton acceptor of the active site. Residues Glu-138, Glu-166, and His-352 each contribute to the Zn(2+) site.

It belongs to the peptidase M20A family. DapE subfamily. In terms of assembly, homodimer. Zn(2+) is required as a cofactor. It depends on Co(2+) as a cofactor.

It catalyses the reaction N-succinyl-(2S,6S)-2,6-diaminopimelate + H2O = (2S,6S)-2,6-diaminopimelate + succinate. Its pathway is amino-acid biosynthesis; L-lysine biosynthesis via DAP pathway; LL-2,6-diaminopimelate from (S)-tetrahydrodipicolinate (succinylase route): step 3/3. Functionally, catalyzes the hydrolysis of N-succinyl-L,L-diaminopimelic acid (SDAP), forming succinate and LL-2,6-diaminopimelate (DAP), an intermediate involved in the bacterial biosynthesis of lysine and meso-diaminopimelic acid, an essential component of bacterial cell walls. This is Succinyl-diaminopimelate desuccinylase from Shewanella baltica (strain OS155 / ATCC BAA-1091).